The following is a 115-amino-acid chain: NADH-ubiquinone oxidoreductase chain 3 (115 aa).

3 consecutive transmembrane segments (helical) span residues 5–25, 55–75, and 86–106; these read LTLM…FWLP, FFLV…LLPL, and LMLT…AYEW.

This sequence belongs to the complex I subunit 3 family. In terms of assembly, core subunit of respiratory chain NADH dehydrogenase (Complex I) which is composed of 45 different subunits. Interacts with TMEM186. Interacts with TMEM242.

Its subcellular location is the mitochondrion inner membrane. The enzyme catalyses a ubiquinone + NADH + 5 H(+)(in) = a ubiquinol + NAD(+) + 4 H(+)(out). Functionally, core subunit of the mitochondrial membrane respiratory chain NADH dehydrogenase (Complex I) which catalyzes electron transfer from NADH through the respiratory chain, using ubiquinone as an electron acceptor. Essential for the catalytic activity of complex I. The polypeptide is NADH-ubiquinone oxidoreductase chain 3 (Avahi cleesei (Cleese's woolly lemur)).